Reading from the N-terminus, the 98-residue chain is Citrate lyase acyl carrier protein (98 aa).

An O-(phosphoribosyl dephospho-coenzyme A)serine modification is found at Ser-14.

This sequence belongs to the CitD family. In terms of assembly, oligomer with a subunit composition of (alpha,beta,gamma)6.

The protein localises to the cytoplasm. Covalent carrier of the coenzyme of citrate lyase. This chain is Citrate lyase acyl carrier protein, found in Vibrio cholerae serotype O1 (strain ATCC 39315 / El Tor Inaba N16961).